We begin with the raw amino-acid sequence, 325 residues long: Anthranilate phosphoribosyltransferase (325 aa).

Residues glycine 74, 77–78 (GD), threonine 82, 84–87 (NVST), 101–109 (KHGNVSITS), and serine 113 contribute to the 5-phospho-alpha-D-ribose 1-diphosphate site. Glycine 74 is a binding site for anthranilate. Residue serine 86 coordinates Mg(2+). Asparagine 104 contributes to the anthranilate binding site. Residue arginine 159 participates in anthranilate binding. Mg(2+)-binding residues include aspartate 217 and glutamate 218.

This sequence belongs to the anthranilate phosphoribosyltransferase family. In terms of assembly, homodimer. Mg(2+) serves as cofactor.

The enzyme catalyses N-(5-phospho-beta-D-ribosyl)anthranilate + diphosphate = 5-phospho-alpha-D-ribose 1-diphosphate + anthranilate. Its pathway is amino-acid biosynthesis; L-tryptophan biosynthesis; L-tryptophan from chorismate: step 2/5. Its function is as follows. Catalyzes the transfer of the phosphoribosyl group of 5-phosphorylribose-1-pyrophosphate (PRPP) to anthranilate to yield N-(5'-phosphoribosyl)-anthranilate (PRA). This is Anthranilate phosphoribosyltransferase from Thermococcus kodakarensis (strain ATCC BAA-918 / JCM 12380 / KOD1) (Pyrococcus kodakaraensis (strain KOD1)).